Here is a 64-residue protein sequence, read N- to C-terminus: Copper-specific metallothionein-2 (64 aa).

Cu(+) is bound by residues cysteine 3, cysteine 5, cysteine 9, cysteine 11, cysteine 16, cysteine 18, cysteine 22, cysteine 24, cysteine 27, cysteine 33, cysteine 40, cysteine 44, cysteine 50, cysteine 52, cysteine 56, and cysteine 58.

This sequence belongs to the metallothionein superfamily. Type 2 family.

Functionally, the metallothioneins are involved in the cellular sequestration of toxic metal ions and regulation of essential trace elements. This isoform binds exclusively copper. In Callinectes sapidus (Blue crab), this protein is Copper-specific metallothionein-2.